We begin with the raw amino-acid sequence, 341 residues long: Anthranilate phosphoribosyltransferase (341 aa).

Residues Gly-81, 84–85 (GD), Thr-89, 91–94 (NIST), 109–117 (KHGSRSVSG), and Ser-121 contribute to the 5-phospho-alpha-D-ribose 1-diphosphate site. Gly-81 is a binding site for anthranilate. Ser-93 is a binding site for Mg(2+). Arg-167 provides a ligand contact to anthranilate. Asp-226 and Glu-227 together coordinate Mg(2+).

The protein belongs to the anthranilate phosphoribosyltransferase family. As to quaternary structure, homodimer. It depends on Mg(2+) as a cofactor.

It carries out the reaction N-(5-phospho-beta-D-ribosyl)anthranilate + diphosphate = 5-phospho-alpha-D-ribose 1-diphosphate + anthranilate. It participates in amino-acid biosynthesis; L-tryptophan biosynthesis; L-tryptophan from chorismate: step 2/5. Its function is as follows. Catalyzes the transfer of the phosphoribosyl group of 5-phosphorylribose-1-pyrophosphate (PRPP) to anthranilate to yield N-(5'-phosphoribosyl)-anthranilate (PRA). The sequence is that of Anthranilate phosphoribosyltransferase from Methylococcus capsulatus (strain ATCC 33009 / NCIMB 11132 / Bath).